A 341-amino-acid polypeptide reads, in one-letter code: tRNA N6-adenosine threonylcarbamoyltransferase (341 aa).

The Fe cation site is built by His111 and His115. Substrate is bound by residues 134 to 138, Asp167, Gly180, and Asn272; that span reads LVSGG. Asp300 serves as a coordination point for Fe cation.

Belongs to the KAE1 / TsaD family. Fe(2+) serves as cofactor.

It localises to the cytoplasm. The enzyme catalyses L-threonylcarbamoyladenylate + adenosine(37) in tRNA = N(6)-L-threonylcarbamoyladenosine(37) in tRNA + AMP + H(+). Its function is as follows. Required for the formation of a threonylcarbamoyl group on adenosine at position 37 (t(6)A37) in tRNAs that read codons beginning with adenine. Is involved in the transfer of the threonylcarbamoyl moiety of threonylcarbamoyl-AMP (TC-AMP) to the N6 group of A37, together with TsaE and TsaB. TsaD likely plays a direct catalytic role in this reaction. This chain is tRNA N6-adenosine threonylcarbamoyltransferase, found in Psychromonas ingrahamii (strain DSM 17664 / CCUG 51855 / 37).